A 2241-amino-acid chain; its full sequence is GON-4-like protein (2241 aa).

Disordered regions lie at residues methionine 1 to serine 46 and lysine 122 to glutamine 259. Basic and acidic residues predominate over residues serine 30–lysine 40. The span at lysine 122–threonine 135 shows a compositional bias: basic residues. Residues glutamine 143–leucine 152 show a composition bias toward basic and acidic residues. Residues proline 183–proline 201 are compositionally biased toward polar residues. Serine 206 is subject to Phosphoserine. Over residues arginine 243–aspartate 255 the composition is skewed to basic residues. Serine 346 carries the phosphoserine modification. Residues glutamate 366–valine 394 are compositionally biased toward acidic residues. Residues glutamate 366–serine 460 are disordered. Positions glutamate 600–serine 1339 are required for interaction with YY1, SIN3A and HDAC1, and transcriptional repression activity. Serine 775 is modified (phosphoserine). Disordered stretches follow at residues proline 1008–proline 1031 and arginine 1111–methionine 1131. Residues arginine 1111–valine 1125 are compositionally biased toward basic residues. Residue serine 1268 is modified to Phosphoserine. Disordered regions lie at residues alanine 1301–aspartate 1320 and leucine 1356–alanine 1601. The segment covering proline 1386–serine 1416 has biased composition (polar residues). Serine 1426 carries the post-translational modification Phosphoserine. The segment covering serine 1434–glycine 1443 has biased composition (polar residues). Acidic residues-rich tracts occupy residues glutamate 1458–methionine 1476 and glycine 1510–glycine 1534. Over residues arginine 1586–arginine 1600 the composition is skewed to basic residues. PAH domains lie at glutamate 1624–glutamate 1696 and glutamate 1706–leucine 1777. The tract at residues proline 1809–arginine 1960 is disordered. 2 stretches are compositionally biased toward basic and acidic residues: residues asparagine 1836 to lysine 1848 and cysteine 1879 to alanine 1901. A phosphoserine mark is found at serine 1896, serine 1902, and serine 1977. 3 disordered regions span residues glutamate 2002–glutamate 2025, glutamate 2039–threonine 2149, and cysteine 2208–glutamate 2241. Serine 2107 is modified (phosphoserine). A compositionally biased stretch (polar residues) spans cysteine 2140–threonine 2149. Residues serine 2148–methionine 2201 form the Myb-like domain.

As to quaternary structure, found in a complex with YY1, SIN3A and HDAC1.

The protein resides in the nucleus. Functionally, has transcriptional repressor activity, probably as part of a complex with YY1, SIN3A and HDAC1. Required for B cell lymphopoiesis. This is GON-4-like protein (GON4L) from Homo sapiens (Human).